Consider the following 52-residue polypeptide: Thiocillin (52 aa).

Residues methionine 1 to alanine 38 constitute a propeptide that is removed on maturation. The segment at residues serine 39–cysteine 40 is a cross-link (thiazole-4-carboxylic acid (Ser-Cys)). A cross-link (pyridine-2,5-dicarboxylic acid (Ser-Cys) (with S-48)) is located at residues serine 39–cysteine 47. Residues serine 39–serine 48 constitute a cross-link (pyridine-2,5-dicarboxylic acid (Ser-Ser) (with C-47)). Threonine 42 is modified ((Z)-2,3-didehydrobutyrine). Residues threonine 42–cysteine 43 constitute a cross-link (thiazole-4-carboxylic acid (Thr-Cys)). Position 44 is a 3-hydroxyvaline (Val); partial (valine 44). Residues valine 44–cysteine 45 constitute a cross-link (thiazole-4-carboxylic acid (Val-Cys)). Residue threonine 46 is modified to O-methylthreonine; partial. A cross-link (thiazole-4-carboxylic acid (Thr-Cys)) is located at residues threonine 46–cysteine 47. A cross-link (thiazole-4-carboxylic acid (Ser-Cys)) is located at residues serine 48–cysteine 49. The thiazole-4-carboxylic acid (Cys-Cys) cross-link spans cysteine 49–cysteine 50. Residue threonine 51 is modified to (Z)-2,3-didehydrobutyrine. Threonine 52 carries the 1-amino-2-propanone; alternate modification. Decarboxylated threonine; alternate is present on threonine 52.

This sequence belongs to the thiocillin family. Post-translationally, maturation of thiazole and oxazole containing antibiotics involves the enzymatic condensation of a Cys, Ser or Thr with the alpha-carbonyl of the preceding amino acid to form a thioether or ether bond, then dehydration to form a double bond with the alpha-amino nitrogen. Thiazoline or oxazoline ring are dehydrogenated to form thiazole or oxazole rings. Maturation of pyridinyl containing antibiotics involves the cross-linking of a Ser and a Cys-Ser pair usually separated by 7 or 8 residues along the peptide chain. The Ser residues are dehydrated to didehydroalanines, then bonded between their beta carbons. The alpha carbonyl of the Cys condenses with alpha carbon of the first Ser to form a pyridinyl ring. The ring may be multiply dehydrogenated to form a pyridine ring with loss of the amino nitrogen of the first Ser. In terms of processing, the 8 possible modification isomers, differing in the presence of modifications at three positions, have been characterized in PubMed:19196969. Val-44 is modified to 3-hydroxyvaline in forms thiocillin I, thiocillin II, YM-266183, and YM-266184. Thr-46 is modified to O-methylthreonine in forms thiocillin II, thiocillin III, thiocillin IV, and YM-266184. Thr-52 is decarboxylated to (R)-1-aminopropan-2-ol in forms micrococcin P1, thiocillin I, thiocillin II, and thiocillin III. Thr-52 is decarboxylated and oxidized to 1-amino-2-propanone in forms micrococcin P2, YM-266183, YM-266184. and thiocillin IV. Post-translationally, the structure of 2,3-didehydrobutyrines is not discussed in PubMed:19196969. However, in Fig. 3 the residues are diagrammed as Z-isomers.

The protein localises to the secreted. In terms of biological role, has bacteriocidal activity against Gram-positive bacteria, but not against Gram-negative bacteria. Inhibits bacterial protein biosynthesis by acting on the elongation factor Tu (EF-Tu). This is Thiocillin from Bacillus cereus (strain ATCC 14579 / DSM 31 / CCUG 7414 / JCM 2152 / NBRC 15305 / NCIMB 9373 / NCTC 2599 / NRRL B-3711).